A 382-amino-acid polypeptide reads, in one-letter code: tRNA (guanine(26)-N(2))-dimethyltransferase (382 aa).

Residues 4-373 enclose the Trm1 methyltransferase domain; sequence VEIIEGKARI…KNLDEIKECI (370 aa). S-adenosyl-L-methionine-binding residues include Arg-44, Arg-69, and Asp-87. Residues Cys-246, Cys-249, Cys-263, and Cys-266 each contribute to the Zn(2+) site.

Belongs to the class I-like SAM-binding methyltransferase superfamily. Trm1 family.

It carries out the reaction guanosine(26) in tRNA + 2 S-adenosyl-L-methionine = N(2)-dimethylguanosine(26) in tRNA + 2 S-adenosyl-L-homocysteine + 2 H(+). Dimethylates a single guanine residue at position 26 of a number of tRNAs using S-adenosyl-L-methionine as donor of the methyl groups. The polypeptide is tRNA (guanine(26)-N(2))-dimethyltransferase (Sulfolobus acidocaldarius (strain ATCC 33909 / DSM 639 / JCM 8929 / NBRC 15157 / NCIMB 11770)).